The sequence spans 65 residues: MSKLKTRKSAAKRFKATATGKFMRRRAFHNHLLDHKSSKLKRHLSTKAVVDERDADNVKLMIPYA.

Belongs to the bacterial ribosomal protein bL35 family.

The protein is Large ribosomal subunit protein bL35 of Prochlorococcus marinus (strain MIT 9301).